The primary structure comprises 524 residues: Bifunctional purine biosynthesis protein PurH (524 aa).

Residues 1–145 (MIQQALLSVS…KNHRDVTVIV (145 aa)) form the MGS-like domain.

Belongs to the PurH family.

It carries out the reaction (6R)-10-formyltetrahydrofolate + 5-amino-1-(5-phospho-beta-D-ribosyl)imidazole-4-carboxamide = 5-formamido-1-(5-phospho-D-ribosyl)imidazole-4-carboxamide + (6S)-5,6,7,8-tetrahydrofolate. It catalyses the reaction IMP + H2O = 5-formamido-1-(5-phospho-D-ribosyl)imidazole-4-carboxamide. It participates in purine metabolism; IMP biosynthesis via de novo pathway; 5-formamido-1-(5-phospho-D-ribosyl)imidazole-4-carboxamide from 5-amino-1-(5-phospho-D-ribosyl)imidazole-4-carboxamide (10-formyl THF route): step 1/1. Its pathway is purine metabolism; IMP biosynthesis via de novo pathway; IMP from 5-formamido-1-(5-phospho-D-ribosyl)imidazole-4-carboxamide: step 1/1. The protein is Bifunctional purine biosynthesis protein PurH of Ralstonia nicotianae (strain ATCC BAA-1114 / GMI1000) (Ralstonia solanacearum).